Consider the following 347-residue polypeptide: UDP-3-O-acylglucosamine N-acyltransferase (347 aa).

Histidine 245 functions as the Proton acceptor in the catalytic mechanism.

This sequence belongs to the transferase hexapeptide repeat family. LpxD subfamily. In terms of assembly, homotrimer.

It carries out the reaction a UDP-3-O-[(3R)-3-hydroxyacyl]-alpha-D-glucosamine + a (3R)-hydroxyacyl-[ACP] = a UDP-2-N,3-O-bis[(3R)-3-hydroxyacyl]-alpha-D-glucosamine + holo-[ACP] + H(+). It participates in bacterial outer membrane biogenesis; LPS lipid A biosynthesis. Catalyzes the N-acylation of UDP-3-O-acylglucosamine using 3-hydroxyacyl-ACP as the acyl donor. Is involved in the biosynthesis of lipid A, a phosphorylated glycolipid that anchors the lipopolysaccharide to the outer membrane of the cell. In Chromohalobacter salexigens (strain ATCC BAA-138 / DSM 3043 / CIP 106854 / NCIMB 13768 / 1H11), this protein is UDP-3-O-acylglucosamine N-acyltransferase.